Consider the following 432-residue polypeptide: Adenylosuccinate synthetase (432 aa).

Residues 13-19 (GDEGKGK) and 41-43 (GHT) contribute to the GTP site. The active-site Proton acceptor is aspartate 14. Aspartate 14 and glycine 41 together coordinate Mg(2+). IMP contacts are provided by residues 14 to 17 (DEGK), 39 to 42 (NAGH), threonine 130, arginine 144, glutamine 225, threonine 240, and arginine 304. The active-site Proton donor is the histidine 42. A substrate-binding site is contributed by 300–306 (AVTGRPR). Residues arginine 306, 332 to 334 (KLD), and 415 to 417 (STG) each bind GTP.

The protein belongs to the adenylosuccinate synthetase family. In terms of assembly, homodimer. Mg(2+) is required as a cofactor.

It is found in the cytoplasm. The catalysed reaction is IMP + L-aspartate + GTP = N(6)-(1,2-dicarboxyethyl)-AMP + GDP + phosphate + 2 H(+). The protein operates within purine metabolism; AMP biosynthesis via de novo pathway; AMP from IMP: step 1/2. In terms of biological role, plays an important role in the de novo pathway of purine nucleotide biosynthesis. Catalyzes the first committed step in the biosynthesis of AMP from IMP. In Pasteurella multocida (strain Pm70), this protein is Adenylosuccinate synthetase.